A 930-amino-acid polypeptide reads, in one-letter code: Translation initiation factor IF-2 (930 aa).

Over residues phenylalanine 50–valine 67 the composition is skewed to low complexity. Disordered regions lie at residues phenylalanine 50–aspartate 195 and glutamate 260–proline 346. Basic and acidic residues-rich tracts occupy residues serine 68–proline 90 and phenylalanine 110–arginine 125. The span at lysine 129–arginine 141 shows a compositional bias: low complexity. 2 stretches are compositionally biased toward basic and acidic residues: residues arginine 157–lysine 167 and valine 262–arginine 295. The segment covering asparagine 309–asparagine 318 has biased composition (low complexity). Basic and acidic residues predominate over residues valine 337–proline 346. The tr-type G domain maps to glutamate 432–glutamate 599. Positions glycine 441 to threonine 448 are G1. Glycine 441–threonine 448 contributes to the GTP binding site. The segment at glycine 466 to histidine 470 is G2. Residues aspartate 487–glycine 490 are G3. Residues aspartate 487–histidine 491 and asparagine 541–aspartate 544 contribute to the GTP site. A G4 region spans residues asparagine 541–aspartate 544. The interval serine 577 to lysine 579 is G5.

This sequence belongs to the TRAFAC class translation factor GTPase superfamily. Classic translation factor GTPase family. IF-2 subfamily.

It localises to the cytoplasm. Its function is as follows. One of the essential components for the initiation of protein synthesis. Protects formylmethionyl-tRNA from spontaneous hydrolysis and promotes its binding to the 30S ribosomal subunits. Also involved in the hydrolysis of GTP during the formation of the 70S ribosomal complex. The polypeptide is Translation initiation factor IF-2 (Streptococcus pneumoniae (strain ATCC BAA-255 / R6)).